The chain runs to 345 residues: Class I histocompatibility antigen, F10 alpha chain (345 aa).

The first 22 residues, 1 to 22 (MGPCGALGLGLLLAAVCGAAAP), serve as a signal peptide directing secretion. The interval 23–110 (ELHTLRYIQT…ILQRRYNQTG (88 aa)) is alpha-1. The Extracellular segment spans residues 23 to 301 (ELHTLRYIQT…WEPPQPNLVP (279 aa)). N-linked (GlcNAc...) asparagine glycans are attached at residues Asn59 and Asn107. The tract at residues 111–201 (GSHTVQWMYG…EYGKAELGRR (91 aa)) is alpha-2. Cystine bridges form between Cys121–Cys183 and Cys221–Cys277. Residues 202–292 (ERPEVRVWGK…SLPQPGLYSW (91 aa)) form an alpha-3 region. The Ig-like C1-type domain maps to 204-293 (PEVRVWGKEA…LPQPGLYSWE (90 aa)). The connecting peptide stretch occupies residues 293–301 (EPPQPNLVP). The chain crosses the membrane as a helical span at residues 302-324 (IVAGVAVAIVAIAIMVGVGFIIY). The Cytoplasmic portion of the chain corresponds to 325 to 345 (RRHAGKKGKGYNIAPGSNPAI).

The protein belongs to the MHC class I family. Heterodimer of an alpha chain and a beta chain (beta-2-microglobulin).

Its subcellular location is the membrane. In terms of biological role, involved in the presentation of foreign antigens to the immune system. This is Class I histocompatibility antigen, F10 alpha chain from Gallus gallus (Chicken).